Reading from the N-terminus, the 344-residue chain is uncharacterized protein (344 aa).

The disordered stretch occupies residues 304-344; that stretch reads AVPAPTPRRPLDSVLQIRQTPEKGRNASDRNARETGWFSPP. Residues 323-336 show a composition bias toward basic and acidic residues; it reads TPEKGRNASDRNAR.

This is an uncharacterized protein from Mycobacterium tuberculosis (strain CDC 1551 / Oshkosh).